The sequence spans 621 residues: TOX high mobility group box family member 4 (621 aa).

Disordered regions lie at residues 153 to 227 (LGLS…QKPV) and 305 to 333 (LDPA…ASIE). Phosphothreonine is present on Thr176. Phosphoserine is present on residues Ser178, Ser181, and Ser182. The segment covering 183–193 (LHEDGVEDFRR) has biased composition (basic and acidic residues). Basic residues predominate over residues 208 to 218 (KQKAPKKRKKK). Positions 213–218 (KKRKKK) match the Nuclear localization signal motif. Positions 223-291 (PQKPVSAYAL…EYLKALAAYK (69 aa)) form a DNA-binding region, HMG box. The span at 307–319 (PAPPSQTPSPPPM) shows a compositional bias: pro residues. A Phosphothreonine modification is found at Thr313. Phosphoserine is present on Ser315. The segment covering 320–333 (ATVDPASPAPASIE) has biased composition (low complexity). Arg481 is modified (asymmetric dimethylarginine). A disordered region spans residues 510–529 (PTVESSPERPMNNSPEAHTV). Ser533, Ser550, Ser552, Ser560, Ser562, and Ser567 each carry phosphoserine.

As to quaternary structure, component of the PNUTS-PP1 phosphatase complex, composed of PPP1R10/PNUTS, TOX4, WDR82 and PPP1CA or PPP1CB or PPP1CC. Interacts with PPP1R10/PNUTS. Interacts with FOXO1 and CREB1 (increased by cAMP); FOXO1 and CREB1 are required for full induction of TOX4-dependent activity and the interactions are inhibited by insulin.

Its subcellular location is the nucleus. The protein localises to the chromosome. Its activity is regulated as follows. In liver, recruited to target gene promoters following treatment with dexamethasone and cAMP. Binding is decreased in presence of insulin. Transcription factor that modulates cell fate reprogramming from the somatic state to the pluripotent and neuronal fate. In liver, controls the expression of hormone-regulated gluconeogenic genes such as G6PC1 and PCK1. This regulation is independent of the insulin receptor activation. Also acts as a regulatory component of protein phosphatase 1 (PP1) complexes. Component of the PNUTS-PP1 protein phosphatase complex, a PP1 complex that regulates RNA polymerase II transcription pause-release. PNUTS-PP1 also plays a role in the control of chromatin structure and cell cycle progression during the transition from mitosis into interphase. This Pongo abelii (Sumatran orangutan) protein is TOX high mobility group box family member 4 (TOX4).